Here is a 172-residue protein sequence, read N- to C-terminus: UBA-like domain-containing protein 2 (172 aa).

Positions 118-130 (PPNQQPVWLPPSS) are enriched in pro residues. Residues 118–172 (PPNQQPVWLPPSSPTGHHTLHHHHHHMHPPPSWPPVSQPANGPQTPVISALHGQR) are disordered. Residues 135-145 (HTLHHHHHHMH) show a composition bias toward basic residues.

It belongs to the UBALD family.

This Danio rerio (Zebrafish) protein is UBA-like domain-containing protein 2 (ubald2).